The chain runs to 340 residues: Anthranilate phosphoribosyltransferase (340 aa).

5-phospho-alpha-D-ribose 1-diphosphate-binding positions include glycine 80, 83-84 (GD), threonine 88, 90-93 (NIST), 108-116 (KHGNRAMSS), and serine 120. Glycine 80 contributes to the anthranilate binding site. Position 92 (serine 92) interacts with Mg(2+). Asparagine 111 serves as a coordination point for anthranilate. Arginine 166 contributes to the anthranilate binding site. 2 residues coordinate Mg(2+): aspartate 225 and glutamate 226.

It belongs to the anthranilate phosphoribosyltransferase family. As to quaternary structure, homodimer. Mg(2+) is required as a cofactor.

The enzyme catalyses N-(5-phospho-beta-D-ribosyl)anthranilate + diphosphate = 5-phospho-alpha-D-ribose 1-diphosphate + anthranilate. It participates in amino-acid biosynthesis; L-tryptophan biosynthesis; L-tryptophan from chorismate: step 2/5. Functionally, catalyzes the transfer of the phosphoribosyl group of 5-phosphorylribose-1-pyrophosphate (PRPP) to anthranilate to yield N-(5'-phosphoribosyl)-anthranilate (PRA). The polypeptide is Anthranilate phosphoribosyltransferase (Roseiflexus castenholzii (strain DSM 13941 / HLO8)).